Here is a 108-residue protein sequence, read N- to C-terminus: UPF0060 membrane protein YnfA (108 aa).

The Periplasmic portion of the chain corresponds to 1-5; it reads MIKTT. Residues 6-26 traverse the membrane as a helical segment; sequence LLFFATALCEIIGCFLPWLWL. Residues 27–30 lie on the Cytoplasmic side of the membrane; sequence KRNA. The chain crosses the membrane as a helical span at residues 31 to 51; sequence SIWLLLPAGISLALFVWLLTL. Residues 52–60 lie on the Periplasmic side of the membrane; that stretch reads HPAASGRVY. The chain crosses the membrane as a helical span at residues 61–81; that stretch reads AAYGGVYVCTALIWLRVVDGV. Residues 82–84 lie on the Cytoplasmic side of the membrane; that stretch reads KLT. A helical transmembrane segment spans residues 85-105; it reads LYDWTGALIALCGMLIIVAGW. Over 106-108 the chain is Periplasmic; it reads GRT.

This sequence belongs to the UPF0060 family.

The protein localises to the cell inner membrane. This Escherichia coli O127:H6 (strain E2348/69 / EPEC) protein is UPF0060 membrane protein YnfA.